The chain runs to 123 residues: Small ribosomal subunit protein uS12 (123 aa).

The interval 1-22 (MATINQLVRQPRKRSVEKSDVP) is disordered. 3-methylthioaspartic acid is present on aspartate 89. Residues 100-123 (GSLDTSGVKGRNQGRSKYGTKRPK) are disordered. Residues 111 to 123 (NQGRSKYGTKRPK) are compositionally biased toward basic residues.

The protein belongs to the universal ribosomal protein uS12 family. As to quaternary structure, part of the 30S ribosomal subunit. Contacts proteins S8 and S17. May interact with IF1 in the 30S initiation complex.

In terms of biological role, with S4 and S5 plays an important role in translational accuracy. Its function is as follows. Interacts with and stabilizes bases of the 16S rRNA that are involved in tRNA selection in the A site and with the mRNA backbone. Located at the interface of the 30S and 50S subunits, it traverses the body of the 30S subunit contacting proteins on the other side and probably holding the rRNA structure together. The combined cluster of proteins S8, S12 and S17 appears to hold together the shoulder and platform of the 30S subunit. This chain is Small ribosomal subunit protein uS12, found in Pseudomonas entomophila (strain L48).